Here is a 542-residue protein sequence, read N- to C-terminus: N-substituted formamide deformylase (542 aa).

Positions 1–2 (MT) are excised as a propeptide.

Homodimer. Requires Zn(2+) as cofactor.

It catalyses the reaction N-benzylformamide + H2O = benzylamine + formate. Its activity is regulated as follows. Completely inhibited by HgCl(2), CuCl, CuCl(2) and AgNO(3). Partially inhibited by ZnCl(2) and SnCl(2). Almost completely inhibited by the reducing reagent DTT. Partially inhibited by phenylhydrazine. Moderately inhibited by phenanthroline and 8-hydroxyquinoline. Completely inhibited by the thiol-specific inhibitors N-ethylmaleimide and p-chloromercuribenzoate. Not inhibited by the carbonyl-specific inhibitors aminoguanidine and semicarbazide, the chelating agents alpha,alpha'-dipyridyl, KCN, diethyldithiocarbamate and EDTA, or the oxidizing reagents and serine-modifying reagents such as H(2)O(2), ammonium persulfate, phenylmethanesulfonyl fluoride and diisopropyl fluorophosphates. In terms of biological role, hydrolyzes N-substituted formamides, but not amides. N-benzylformamide is the preferred substrate, while N-butylformamide is hydrolyzed at a much lower rate. Has very low activity towards allylformamide, N-(2-cyclohex-1-enylethyl)formamide and N-(alpha-methylbenzyl)formamide. The sequence is that of N-substituted formamide deformylase from Arthrobacter pascens.